The following is a 757-amino-acid chain: MSLLFSRCNSIVTVKKDKRHMAEVNASPLKHFVTAKKKINGIFEQLGAYIQESASFLEDTHRNTELDPVTTEEQVLDVKGYLSKVRGISEVLARRHMKVAFFGRTSNGKSTVINAMLWDKVLPSGIGHTTNCFLRVGGTDGHEAFLLTEGSEEKKSVKTVNQLAHALHQDEQLHAGSMVSVMWPNSKCPLLKDDLVLMDSPGIDVTTELDSWIDKFCLDADVFVLVANSESTLMQTEKQFFHKVSERLSRPNIFILNNRWDASASEPEYMEEVRRQHMERCTSFLVDELGVVDRAQAGDRIFFVSAKEVLSARVQKAQGMPEGGGALAEGFQVRMFEFQNFERQFEECISQSAVKTKFEQHTVRAKQIAEAVRLIMDSLHIAAQEQRVYCLEMREERQDRLRFIDKQLELLAQDYKLRIKQITEEVERQVSTAMAEEIRRLSVLVDEYQMDFHPSPVVLKVYKNELHRHIEEGLGRNLSDRCSTAIASSLQTMQQDMIDGLKPLLPVSMRNQIDMLVPRQCFSLSYDLNCDKLCADFQEDIEFHFSLGWTMLVNRFLGPKNSRRALLGYSDQVQRPLPLTPANPSMPPLPQSSLTQEELMVSMVTGLASLTSRTSMGILVVGGVVWKAVGWRLIALSFGLYGLLYVYERLTWTTKAKERAFKRQFVEYASEKLQLIISYTGSNCSHQVQQELSGTFAHLCQQVDITRDNLEQEIAAMNKKVEALDSLQSRAKLLRNKAGWLDSELNMFTHQYLQPSR.

The Cytoplasmic portion of the chain corresponds to 1-604; that stretch reads MSLLFSRCNS…TQEELMVSMV (604 aa). Positions 30-94 are part of a helix bundle domain, formed by helices from N-terminal and C-terminal regions; it reads KHFVTAKKKI…VRGISEVLAR (65 aa). Positions 93–342 constitute a Dynamin-type G domain; sequence ARRHMKVAFF…VRMFEFQNFE (250 aa). The G1 motif stretch occupies residues 103–110; sequence GRTSNGKS. Position 106-111 (106-111) interacts with GTP; that stretch reads SNGKST. Threonine 111 carries the post-translational modification Phosphothreonine; by PINK1. Residues 129-130 form a G2 motif region; it reads TT. The G3 motif stretch occupies residues 199–202; it reads DSPG. 258 to 261 provides a ligand contact to GTP; sequence NRWD. The interval 258–261 is G4 motif; it reads NRWD. Glutamate 288 is a region of interest (G5 motif). The GTP site is built by serine 305 and lysine 307. Positions 359-385 are part of a helix bundle domain, formed by helices from N-terminal and C-terminal regions; that stretch reads EQHTVRAKQIAEAVRLIMDSLHIAAQE. The stretch at 406-434 forms a coiled coil; it reads KQLELLAQDYKLRIKQITEEVERQVSTAM. Serine 442 carries the phosphoserine modification. Residues 605 to 625 form a helical membrane-spanning segment; that stretch reads TGLASLTSRTSMGILVVGGVV. Residue tryptophan 626 is a topological domain, mitochondrial intermembrane. Residues 627–647 form a helical membrane-spanning segment; that stretch reads KAVGWRLIALSFGLYGLLYVY. Topologically, residues 648 to 757 are cytoplasmic; the sequence is ERLTWTTKAK…FTHQYLQPSR (110 aa). Residues 696 to 738 are a coiled coil; that stretch reads FAHLCQQVDITRDNLEQEIAAMNKKVEALDSLQSRAKLLRNKA. Residues 722 to 753 are part of a helix bundle domain, formed by helices from N-terminal and C-terminal regions; the sequence is EALDSLQSRAKLLRNKAGWLDSELNMFTHQYL.

It belongs to the TRAFAC class dynamin-like GTPase superfamily. Dynamin/Fzo/YdjA family. Mitofusin subfamily. In terms of assembly, forms homomultimers and heteromultimers with MFN1. Oligomerization is essential for mitochondrion fusion. Interacts with VAT1. Interacts with STOML2; may form heterooligomers. Interacts (phosphorylated) with PRKN. Interacts with EIF2AK3. Interacts with THG1L; THG1L probably functions as a guanyl-nucleotide exchange factor/GEF, activating MFN2. Phosphorylated by PINK1. Post-translationally, ubiquitinated by non-degradative ubiquitin by PRKN, promoting mitochondrial fusion; deubiquitination by USP30 inhibits mitochondrial fusion. Ubiquitinated by HUWE1 when dietary stearate (C18:0) levels are low; ubiquitination inhibits mitochondrial fusion. In terms of tissue distribution, ubiquitous. Expression is markedly reduced in ApoE-knockout mouse atherosclerotic arteries.

Its subcellular location is the mitochondrion outer membrane. It carries out the reaction GTP + H2O = GDP + phosphate + H(+). Functionally, mitochondrial outer membrane GTPase that mediates mitochondrial clustering and fusion. Mitochondria are highly dynamic organelles, and their morphology is determined by the equilibrium between mitochondrial fusion and fission events. Overexpression induces the formation of mitochondrial networks. Membrane clustering requires GTPase activity and may involve a major rearrangement of the coiled coil domains. Plays a central role in mitochondrial metabolism and may be associated with obesity and/or apoptosis processes. Plays an important role in the regulation of vascular smooth muscle cell proliferation. Involved in the clearance of damaged mitochondria via selective autophagy (mitophagy). Is required for PRKN recruitment to dysfunctional mitochondria. Involved in the control of unfolded protein response (UPR) upon ER stress including activation of apoptosis and autophagy during ER stress. Acts as an upstream regulator of EIF2AK3 and suppresses EIF2AK3 activation under basal conditions. The sequence is that of Mitofusin-2 (Mfn2) from Mus musculus (Mouse).